A 146-amino-acid polypeptide reads, in one-letter code: Oleosin (146 aa).

N-acetylalanine is present on A2. 3 consecutive transmembrane segments (helical) span residues 22–42 (ILGFITLFVSGAILLLLTGLT), 56–76 (VLIFFSPILIPVATVLFVAVA), and 77–97 (GFLSAGGFGLAALSAISWLYN). A Proline-knot motif is present at residues 55–66 (PVLIFFSPILIP).

Belongs to the oleosin family. Expressed in pollen (at protein level).

It is found in the lipid droplet. The protein localises to the membrane. The sequence is that of Oleosin from Pinus elliottii (Slash pine).